Here is a 115-residue protein sequence, read N- to C-terminus: UPF0738 protein SAB0871 (115 aa).

The protein belongs to the UPF0738 family.

This Staphylococcus aureus (strain bovine RF122 / ET3-1) protein is UPF0738 protein SAB0871.